The chain runs to 966 residues: Mitogen-activated protein kinase kinase kinase 13 (966 aa).

2 disordered regions span residues 1–22 (MANF…SESK) and 93–112 (SEMA…STSG). Positions 96–112 (AVSQGNSNTVDAESTSG) are enriched in polar residues. Positions 168–409 (ISELQWLGSG…FRQTLMHLDI (242 aa)) constitute a Protein kinase domain. ATP contacts are provided by residues 174 to 182 (LGSGAQGAV) and lysine 195. Aspartate 279 acts as the Proton acceptor in catalysis. Leucine-zipper stretches follow at residues 433–454 (VKKH…DEEL) and 486–507 (LSAI…EQAV). 4 disordered regions span residues 534–652 (KRKG…SQSH), 744–834 (DIPS…RRQR), 846–873 (STFS…PDEL), and 887–906 (DLLS…SDGL). Residues 567 to 581 (SPLSGSPKMSTSSSK) show a composition bias toward low complexity. Residues 582-594 (SRYRSKPRHRRGN) are compositionally biased toward basic residues. Composition is skewed to polar residues over residues 609-629 (QPAQ…SQYP) and 781-795 (FSSC…TSHL). Residues 814-827 (DSSEEEEGEVDSEV) are compositionally biased toward acidic residues. The segment at 815–828 (SSEEEEGEVDSEVE) is acidic. Residues 846 to 855 (STFSSENFSV) show a composition bias toward polar residues.

It belongs to the protein kinase superfamily. STE Ser/Thr protein kinase family. MAP kinase kinase kinase subfamily. As to quaternary structure, homodimer; forms dimers through the leucine-zipper motif. Interacts with the C-terminus of MAPK8IP1 through the kinase catalytic domain. Binds PRDX3. Associates with the IKK complex through the kinase domain. It depends on Mg(2+) as a cofactor. Autophosphorylated on serine and threonine residues.

The protein resides in the cytoplasm. It localises to the membrane. It carries out the reaction L-seryl-[protein] + ATP = O-phospho-L-seryl-[protein] + ADP + H(+). The catalysed reaction is L-threonyl-[protein] + ATP = O-phospho-L-threonyl-[protein] + ADP + H(+). Its activity is regulated as follows. Activated by autophosphorylation and homodimerization. In terms of biological role, activates the JUN N-terminal pathway through activation of the MAP kinase kinase MAP2K7. Acts synergistically with PRDX3 to regulate the activation of NF-kappa-B in the cytosol. This activation is kinase-dependent and involves activating the IKK complex, the IKBKB-containing complex that phosphorylates inhibitors of NF-kappa-B. In Pongo abelii (Sumatran orangutan), this protein is Mitogen-activated protein kinase kinase kinase 13.